A 295-amino-acid polypeptide reads, in one-letter code: G1/S-specific cyclin-D1 (295 aa).

Residues 28–152 enclose the Cyclin N-terminal domain; that stretch reads LRAMLKTEET…LLVNKLKWNL (125 aa). Lys269 is covalently cross-linked (Glycyl lysine isopeptide (Lys-Gly) (interchain with G-Cter in ubiquitin)). Residues 269 to 295 are disordered; the sequence is KATEEEGEVEEEAGLACTPTDVRDVDI. Thr286 bears the Phosphothreonine mark.

This sequence belongs to the cyclin family. Cyclin D subfamily. As to quaternary structure, interacts with either CDK4 or CDK6 protein kinase to form a serine/threonine kinase holoenzyme complex. The cyclin subunit imparts substrate specificity to the complex. Component of the ternary complex CCND1/CDK4/CDKN1B required for nuclear translocation and modulation of CDK4-mediated kinase activity. Interacts directly with CDKN1B. Can form similar complexes with either CDKN1A or CDKN2A. Interacts with UHRF2; the interaction ubiquitinates CCND1 and appears to occur independently of phosphorylation. Interacts with USP2. Interacts (via cyclin N-terminal domain) with INSM1 (via N-terminal region); the interaction competes with the binding of CCND1 to CDK4 during cell cycle progression and inhibits CDK4 activity. Interacts with CDK4; the interaction is prevented with the binding of CCND1 to INSM1 during cell cycle progression. In terms of processing, phosphorylation at Thr-286 by MAP kinases is required for ubiquitination and degradation by the DCX(AMBRA1) complex. It also plays an essential role for recognition by the FBXO31 component of SCF (SKP1-cullin-F-box) protein ligase complex following DNA damage. Ubiquitinated at Lys-269 by the DCX(AMBRA1) complex during the transition from G1 to S cell phase, leading to its degradation: ubiquitination is dependent on Thr-286 phosphorylation. The DCX(AMBRA1) complex represents the major regulator of CCND1 stability during the G1/S transition. Also ubiquitinated by the SCF(FBXO4) and Cul7-RING(FBXW8) ubiquitin-protein ligase complexes. Following DNA damage it is ubiquitinated by the SCF(FBXO31) protein ligase complex. SCF(FBXO31) ubiquitination is dependent on Thr-286 phosphorylation. Ubiquitinated also by UHRF2 apparently in a phosphorylation-independent manner. Ubiquitination leads to its degradation and G1 arrest. Deubiquitinated by USP2; leading to its stabilization.

It localises to the nucleus. The protein localises to the cytoplasm. Its subcellular location is the nucleus membrane. Its function is as follows. Regulatory component of the cyclin D1-CDK4 (DC) complex that phosphorylates and inhibits members of the retinoblastoma (RB) protein family including RB1 and regulates the cell-cycle during G(1)/S transition. Phosphorylation of RB1 allows dissociation of the transcription factor E2F from the RB/E2F complex and the subsequent transcription of E2F target genes which are responsible for the progression through the G(1) phase. Hypophosphorylates RB1 in early G(1) phase. Cyclin D-CDK4 complexes are major integrators of various mitogenenic and antimitogenic signals. Also a substrate for SMAD3, phosphorylating SMAD3 in a cell-cycle-dependent manner and repressing its transcriptional activity. Component of the ternary complex, cyclin D1/CDK4/CDKN1B, required for nuclear translocation and activity of the cyclin D-CDK4 complex. Exhibits transcriptional corepressor activity with INSM1 on the NEUROD1 and INS promoters in a cell cycle-independent manner. The polypeptide is G1/S-specific cyclin-D1 (Ccnd1) (Rattus norvegicus (Rat)).